The following is a 300-amino-acid chain: Quinolinate synthase (300 aa).

2 residues coordinate iminosuccinate: His-21 and Ser-38. Cys-83 provides a ligand contact to [4Fe-4S] cluster. Residues 109–111 (YVN) and Ser-126 each bind iminosuccinate. Cys-170 contributes to the [4Fe-4S] cluster binding site. Iminosuccinate is bound by residues 196–198 (HPE) and Thr-213. [4Fe-4S] cluster is bound at residue Cys-256.

Belongs to the quinolinate synthase family. Type 2 subfamily. In terms of assembly, monomer. Homodimer. [4Fe-4S] cluster is required as a cofactor.

The protein resides in the cytoplasm. The enzyme catalyses iminosuccinate + dihydroxyacetone phosphate = quinolinate + phosphate + 2 H2O + H(+). The protein operates within cofactor biosynthesis; NAD(+) biosynthesis; quinolinate from iminoaspartate: step 1/1. Catalyzes the condensation of iminoaspartate with dihydroxyacetone phosphate to form quinolinate. The chain is Quinolinate synthase from Pyrococcus horikoshii (strain ATCC 700860 / DSM 12428 / JCM 9974 / NBRC 100139 / OT-3).